Here is a 171-residue protein sequence, read N- to C-terminus: Early E1A protein (171 aa).

The interval 40-48 (PTLHDLFDV) is interaction with RB1 in competition with E2F1. Residues 67-96 (DTDSSASTEGDSGFSPLSTPPVSPIPPHPT) are disordered. A compositionally biased stretch (pro residues) spans 84–96 (STPPVSPIPPHPT). The short motif at 106-110 (LLCLE) is the LXCXE motif, interaction with host RB1 element. A zinc finger lies at 145–163 (CLRCAFYQEQDDNALCGLC). A Nuclear localization signal motif is present at residues 166–171 (KGPCRR).

This sequence belongs to the adenoviridae E1A protein family. In terms of assembly, interacts with host UBE2I; this interaction interferes with polySUMOylation. Interacts with host RB1; this interaction induces the aberrant dissociation of RB1-E2F1 complex thereby disrupting the activity of RB1 and activating E2F1-regulated genes. Interacts with host ATF7; the interaction enhances ATF7-mediated viral transactivation activity which requires the zinc binding domains of both proteins. Isoform early E1A 32 kDa protein and isoform early E1A 26 kDa protein interact (via N-terminus) with CUL1 and E3 ubiquitin ligase RBX1; these interactions inhibit RBX1-CUL1-dependent elongation reaction of ubiquitin chains and attenuate ubiquitination of SCF(FBXW7) target proteins. Interacts (via PXLXP motif) with host ZMYND11/BS69 (via MYND-type zinc finger); this interaction inhibits E1A mediated transactivation. Interacts with host EP300; this interaction stimulates the acetylation of RB1 by recruiting EP300 and RB1 into a multimeric-protein complex. Interacts with host CTBP1 and CTBP2; this interaction seems to potentiate viral replication. Interacts with host DCAF7. Interacts with host DYRK1A. Interacts with host KPNA4; this interaction allows E1A import into the host nucleus. Interacts with host EP400; this interaction stabilizes MYC. Interacts with host TBP protein; this interaction probably disrupts the TBP-TATA complex.

It is found in the host nucleus. Plays a role in viral genome replication by driving entry of quiescent cells into the cell cycle. Stimulation of progression from G1 to S phase allows the virus to efficiently use the cellular DNA replicating machinery to achieve viral genome replication. E1A protein has both transforming and trans-activating activities. Induces the disassembly of the E2F1 transcription factor from RB1 by direct competition for the same binding site on RB1, with subsequent transcriptional activation of E2F1-regulated S-phase genes and of the E2 region of the adenoviral genome. Release of E2F1 leads to the ARF-mediated inhibition of MDM2 and causes TP53/p53 to accumulate because it is not targeted for degradation by MDM2-mediated ubiquitination anymore. This increase in TP53, in turn, would arrest the cell proliferation and direct its death but this effect is counteracted by the viral protein E1B-55K. Inactivation of the ability of RB1 to arrest the cell cycle is critical for cellular transformation, uncontrolled cellular growth and proliferation induced by viral infection. Interaction with RBX1 and CUL1 inhibits ubiquitination of the proteins targeted by SCF(FBXW7) ubiquitin ligase complex, and may be linked to unregulated host cell proliferation. The tumorigenesis-restraining activity of E1A may be related to the disruption of the host CtBP-CtIP complex through the CtBP binding motif. The sequence is that of Early E1A protein from Canis lupus familiaris (Dog).